The primary structure comprises 433 residues: Type I acyl-CoA thioesterase mpaH (433 aa).

An abhydrolase domain region spans residues 58–246 (HGVGLPKELY…IKARFGTTAD (189 aa)). Position 60 (valine 60) interacts with substrate. Residue serine 139 is the Nucleophile of the active site. A substrate-binding site is contributed by phenylalanine 140. Catalysis depends on residues aspartate 163 and histidine 365.

The protein belongs to the AB hydrolase superfamily. MpaH hydrolase family. In terms of assembly, homodimer.

The protein resides in the peroxisome matrix. The enzyme catalyses mycophenolyl-CoA + H2O = mycophenolate + CoA + H(+). It participates in secondary metabolite biosynthesis; terpenoid biosynthesis. Functionally, type I acyl-CoA thioesterase; part of the gene cluster that mediates the biosynthesis of mycophenolic acid (MPA), the first isolated antibiotic natural product in the world obtained from a culture of Penicillium brevicompactum in 1893. MpaH acts as a peroxisomal acyl-CoA hydrolase that converts MPA-CoA into the final product MPA. The first step of the pathway is the synthesis of 5-methylorsellinic acid (5MOA) by the cytosolic polyketide synthase mpaC. 5MOA is then converted to the phthalide compound 5,7-dihydroxy-4,6-dimethylphthalide (DHMP) by the endoplasmic reticulum-bound cytochrome P450 monooxygenase mpaDE. MpaDE first catalyzes hydroxylation of 5-MOA to 4,6-dihydroxy-2-(hydroxymethyl)-3-methylbenzoic acid (DHMB). MpaDE then acts as a lactone synthase that catalyzes the ring closure to convert DHMB into DHMP. The next step is the prenylation of DHMP by the Golgi apparatus-associated prenyltransferase mpaA to yield farnesyl-DHMP (FDHMP). The ER-bound oxygenase mpaB then mediates the oxidative cleavage the C19-C20 double bond in FDHMP to yield FDHMP-3C via a mycophenolic aldehyde intermediate. The O-methyltransferase mpaG catalyzes the methylation of FDHMP-3C to yield MFDHMP-3C. After the cytosolic methylation of FDHMP-3C, MFDHMP-3C enters into peroxisomes probably via free diffusion due to its low molecular weight. Upon a peroxisomal CoA ligation reaction, catalyzed by a beta-oxidation component enzyme acyl-CoA ligase ACL891, MFDHMP-3C-CoA would then be restricted to peroxisomes for the following beta-oxidation pathway steps. The peroxisomal beta-oxidation machinery than converts MFDHMP-3C-CoA into MPA_CoA, via a beta-oxidation chain-shortening process. Finally mpaH acts as a peroxisomal acyl-CoA hydrolase with high substrate specificity toward MPA-CoA to release the final product MPA. In Penicillium brevicompactum, this protein is Type I acyl-CoA thioesterase mpaH.